A 579-amino-acid polypeptide reads, in one-letter code: PCNA-interacting partner (579 aa).

Positions 480–543 are disordered; sequence TSFGNVHLDR…AKIPKKSNDS (64 aa). Residues 486–496 are compositionally biased toward basic and acidic residues; that stretch reads HLDRSKNEKVS.

The protein belongs to the PARI family. As to quaternary structure, interacts with RAD51 and PCNA. Interacts with PARP1. Interacts with TASOR. As to expression, restricted to testis. Overexpressed in multiple cancer cells.

The protein resides in the cytoplasm. It localises to the nucleus. In terms of biological role, required to suppress inappropriate homologous recombination, thereby playing a central role DNA repair and in the maintenance of genomic stability. Antagonizes homologous recombination by interfering with the formation of the RAD51-DNA homologous recombination structure. Binds single-strand DNA and poly(A) homopolymers. Positively regulate the poly(ADP-ribosyl)ation activity of PARP1; however such function may be indirect. This Homo sapiens (Human) protein is PCNA-interacting partner (PARPBP).